We begin with the raw amino-acid sequence, 454 residues long: Chromosomal replication initiator protein DnaA (454 aa).

A domain I, interacts with DnaA modulators region spans residues 1–79 (MSLCLWKQCL…NSPFIKFKVY (79 aa)). The interval 79-117 (YQTSKEKKFKKNILQKIQNLNAKPIWDKIPIFKKSSHRS) is domain II. The tract at residues 118 to 334 (NINKKHSFEN…GALNRVIVNA (217 aa)) is domain III, AAA+ region. Residues Gly162, Gly164, Lys165, and Thr166 each coordinate ATP. The segment at 335–454 (NFTHRSITVE…FSNLIRTLSV (120 aa)) is domain IV, binds dsDNA.

This sequence belongs to the DnaA family. Oligomerizes as a right-handed, spiral filament on DNA at oriC.

It localises to the cytoplasm. Functionally, plays an essential role in the initiation and regulation of chromosomal replication. ATP-DnaA binds to the origin of replication (oriC) to initiate formation of the DNA replication initiation complex once per cell cycle. Binds the DnaA box (a 9 base pair repeat at the origin) and separates the double-stranded (ds)DNA. Forms a right-handed helical filament on oriC DNA; dsDNA binds to the exterior of the filament while single-stranded (ss)DNA is stabiized in the filament's interior. The ATP-DnaA-oriC complex binds and stabilizes one strand of the AT-rich DNA unwinding element (DUE), permitting loading of DNA polymerase. After initiation quickly degrades to an ADP-DnaA complex that is not apt for DNA replication. Binds acidic phospholipids. In Buchnera aphidicola subsp. Schizaphis graminum (strain Sg), this protein is Chromosomal replication initiator protein DnaA.